Reading from the N-terminus, the 313-residue chain is Ribosomal RNA small subunit methyltransferase H (313 aa).

S-adenosyl-L-methionine-binding positions include 35 to 37 (GGH), Asp55, Phe79, Asp101, and Gln108.

Belongs to the methyltransferase superfamily. RsmH family.

It localises to the cytoplasm. It carries out the reaction cytidine(1402) in 16S rRNA + S-adenosyl-L-methionine = N(4)-methylcytidine(1402) in 16S rRNA + S-adenosyl-L-homocysteine + H(+). Specifically methylates the N4 position of cytidine in position 1402 (C1402) of 16S rRNA. The sequence is that of Ribosomal RNA small subunit methyltransferase H from Escherichia coli O7:K1 (strain IAI39 / ExPEC).